Consider the following 238-residue polypeptide: MRSGVIAQKVGMTRVFTEAGEHIPVTVLKLGNCQVVGHRTEEKNGYVALQLGSGSRKTVYMPKAERGQFAVAKVEPKRRVEEFRVTADAMIPVGAEIQADHFVVGQFVDVTGTSVGKGFAGGMKRWNFGGLRATHGVSISHRSIGSTGGRQDPGKTWKNKKMPGHMGVDRITTLNLRVVQLDVERGLILVEGAVPGSKGGWIRVRDAVKKPLPKEAPKPGKFKVAGGEAEAAAQQEGA.

Disordered stretches follow at residues Ser-140–Gly-164 and Leu-212–Ala-238. Gln-151 carries the N5-methylglutamine modification. The segment covering Ala-225 to Ala-238 has biased composition (low complexity).

The protein belongs to the universal ribosomal protein uL3 family. As to quaternary structure, part of the 50S ribosomal subunit. Forms a cluster with proteins L14 and L19. In terms of processing, methylated by PrmB.

In terms of biological role, one of the primary rRNA binding proteins, it binds directly near the 3'-end of the 23S rRNA, where it nucleates assembly of the 50S subunit. This chain is Large ribosomal subunit protein uL3, found in Bradyrhizobium diazoefficiens (strain JCM 10833 / BCRC 13528 / IAM 13628 / NBRC 14792 / USDA 110).